We begin with the raw amino-acid sequence, 56 residues long: Ferredoxin (56 aa).

2 4Fe-4S ferredoxin-type domains span residues 2 to 28 (AYKI…SQGD) and 29 to 56 (SIFV…PVQE). Residues Cys9, Cys12, Cys15, Cys19, Cys38, Cys41, Cys44, and Cys48 each coordinate [4Fe-4S] cluster.

[4Fe-4S] cluster is required as a cofactor.

In terms of biological role, ferredoxins are iron-sulfur proteins that transfer electrons in a wide variety of metabolic reactions. In Clostridium pasteurianum, this protein is Ferredoxin.